The following is a 249-amino-acid chain: CDP-diacylglycerol pyrophosphatase (249 aa).

A helical transmembrane segment spans residues 7–27 (FLLAVVIVAAVAGIGYWKLAA).

This sequence belongs to the Cdh family.

Its subcellular location is the cell inner membrane. It catalyses the reaction a CDP-1,2-diacyl-sn-glycerol + H2O = a 1,2-diacyl-sn-glycero-3-phosphate + CMP + 2 H(+). It participates in phospholipid metabolism; CDP-diacylglycerol degradation; phosphatidate from CDP-diacylglycerol: step 1/1. This is CDP-diacylglycerol pyrophosphatase from Citrobacter koseri (strain ATCC BAA-895 / CDC 4225-83 / SGSC4696).